The primary structure comprises 68 residues: MSLELLSKLETKIQAALETIELLKMELEEEKQKNHTLNEQNQQLSQDLTSWNEKVTGLVGLLNDEVSE.

Positions 3-58 form a coiled coil; sequence LELLSKLETKIQAALETIELLKMELEEEKQKNHTLNEQNQQLSQDLTSWNEKVTGL.

It belongs to the ZapB family. In terms of assembly, homodimer. The ends of the coiled-coil dimer bind to each other, forming polymers. Interacts with FtsZ.

The protein localises to the cytoplasm. Functionally, non-essential, abundant cell division factor that is required for proper Z-ring formation. It is recruited early to the divisome by direct interaction with FtsZ, stimulating Z-ring assembly and thereby promoting cell division earlier in the cell cycle. Its recruitment to the Z-ring requires functional FtsA or ZipA. The polypeptide is Cell division protein ZapB (Shewanella loihica (strain ATCC BAA-1088 / PV-4)).